The primary structure comprises 297 residues: Aspartate carbamoyltransferase catalytic subunit (297 aa).

Positions 49 and 50 each coordinate carbamoyl phosphate. Residue lysine 77 coordinates L-aspartate. The carbamoyl phosphate site is built by arginine 99, histidine 129, and glutamine 132. L-aspartate is bound by residues arginine 162 and arginine 215. Residues glycine 256 and proline 257 each contribute to the carbamoyl phosphate site.

This sequence belongs to the aspartate/ornithine carbamoyltransferase superfamily. ATCase family. As to quaternary structure, heterododecamer (2C3:3R2) of six catalytic PyrB chains organized as two trimers (C3), and six regulatory PyrI chains organized as three dimers (R2).

It catalyses the reaction carbamoyl phosphate + L-aspartate = N-carbamoyl-L-aspartate + phosphate + H(+). It participates in pyrimidine metabolism; UMP biosynthesis via de novo pathway; (S)-dihydroorotate from bicarbonate: step 2/3. Its function is as follows. Catalyzes the condensation of carbamoyl phosphate and aspartate to form carbamoyl aspartate and inorganic phosphate, the committed step in the de novo pyrimidine nucleotide biosynthesis pathway. The chain is Aspartate carbamoyltransferase catalytic subunit from Legionella pneumophila (strain Paris).